The primary structure comprises 654 residues: Coiled-coil domain-containing protein 81 (654 aa).

Residues 196–270 are disordered; sequence SRESYRKRPN…RERQSISPAK (75 aa). S206 is modified (phosphoserine). Composition is skewed to basic and acidic residues over residues 212–222 and 232–251; these read RIEHKETENKT and GENR…EGGA. A phosphoserine mark is found at S273, S275, S296, and S419. The segment covering 293 to 302 has biased composition (polar residues); that stretch reads ENLSSPGCQR. A disordered region spans residues 293 to 318; it reads ENLSSPGCQRNDNERPRTSPAPACQD. Residues 431–562 are a coiled coil; the sequence is SQSLLKQMES…QRRDLQMLQR (132 aa).

The protein resides in the cytoplasm. It localises to the cytoskeleton. It is found in the microtubule organizing center. Its subcellular location is the centrosome. The protein is Coiled-coil domain-containing protein 81 (Ccdc81) of Mus musculus (Mouse).